The sequence spans 401 residues: Multidrug resistance protein MdtA (401 aa).

Residues 1 to 20 (MNQNNKHRTLLFRAALAAIA) form the signal peptide.

It belongs to the membrane fusion protein (MFP) (TC 8.A.1) family. As to quaternary structure, part of a tripartite efflux system composed of MdtA, MdtB and MdtC.

Its subcellular location is the cell inner membrane. The polypeptide is Multidrug resistance protein MdtA (Photorhabdus laumondii subsp. laumondii (strain DSM 15139 / CIP 105565 / TT01) (Photorhabdus luminescens subsp. laumondii)).